A 472-amino-acid polypeptide reads, in one-letter code: Aspartyl/glutamyl-tRNA(Asn/Gln) amidotransferase subunit B (472 aa).

Belongs to the GatB/GatE family. GatB subfamily. Heterotrimer of A, B and C subunits.

It carries out the reaction L-glutamyl-tRNA(Gln) + L-glutamine + ATP + H2O = L-glutaminyl-tRNA(Gln) + L-glutamate + ADP + phosphate + H(+). The catalysed reaction is L-aspartyl-tRNA(Asn) + L-glutamine + ATP + H2O = L-asparaginyl-tRNA(Asn) + L-glutamate + ADP + phosphate + 2 H(+). Allows the formation of correctly charged Asn-tRNA(Asn) or Gln-tRNA(Gln) through the transamidation of misacylated Asp-tRNA(Asn) or Glu-tRNA(Gln) in organisms which lack either or both of asparaginyl-tRNA or glutaminyl-tRNA synthetases. The reaction takes place in the presence of glutamine and ATP through an activated phospho-Asp-tRNA(Asn) or phospho-Glu-tRNA(Gln). In Campylobacter jejuni subsp. jejuni serotype O:6 (strain 81116 / NCTC 11828), this protein is Aspartyl/glutamyl-tRNA(Asn/Gln) amidotransferase subunit B.